The chain runs to 924 residues: Cell division control protein 13 (924 aa).

A disordered region spans residues 265-336 (PTTDISNMGE…KRKRKLSFHS (72 aa)). Positions 295–308 (GKYFSSKSYIQSQT) are enriched in polar residues. Phosphoserine is present on serine 306. Threonine 308 carries the post-translational modification Phosphothreonine. Residues 309–326 (PERKTSVPNNWHDDDSGS) show a composition bias toward basic and acidic residues. Position 333 is a phosphoserine (serine 333). Residues 500–686 (KMARKDPTIE…FEEYRRFFPI (187 aa)) constitute a DNA-binding region (OB).

Interacts with POL1, EST1, FUN12, STM1, STN1 and TEN1.

It is found in the chromosome. The protein resides in the telomere. In terms of biological role, single-stranded telomeric DNA-binding protein that regulates telomere replication. Has a role in both positive and negative regulation. Promotes [TG(1-3)] strand lengthening via interaction with EST1. Promotes [C(1-3)A] strand re-synthesis by DNA polymerase alpha via interaction with POL1. Negatively regulates telomere elongation of the G strand via binding with STN1 thereby inhibiting telomerase activity. The chain is Cell division control protein 13 (CDC13) from Saccharomyces cerevisiae (strain ATCC 204508 / S288c) (Baker's yeast).